Reading from the N-terminus, the 122-residue chain is Large ribosomal subunit protein uL14 (122 aa).

This sequence belongs to the universal ribosomal protein uL14 family. As to quaternary structure, part of the 50S ribosomal subunit. Forms a cluster with proteins L3 and L19. In the 70S ribosome, L14 and L19 interact and together make contacts with the 16S rRNA in bridges B5 and B8.

In terms of biological role, binds to 23S rRNA. Forms part of two intersubunit bridges in the 70S ribosome. The protein is Large ribosomal subunit protein uL14 of Thermomicrobium roseum (strain ATCC 27502 / DSM 5159 / P-2).